Here is a 146-residue protein sequence, read N- to C-terminus: Inclusion membrane protein D (146 aa).

The next 2 membrane-spanning stretches (helical) occupy residues 38 to 58 (AAVAVATILAIALLVVAGLLF) and 68 to 88 (VVAASLFFGVGAFLLGGALVG).

The protein localises to the secreted. It localises to the host vacuole. It is found in the host pathogen-containing vacuole. The protein resides in the host pathogen-containing vacuole membrane. Its function is as follows. Host inclusion membrane protein probably involved in early modification events of the chlamydial inclusion. The polypeptide is Inclusion membrane protein D (Chlamydia trachomatis serovar L2 (strain ATCC VR-902B / DSM 19102 / 434/Bu)).